The primary structure comprises 442 residues: Zinc finger protein sfp1 (442 aa).

The segment covering 193-208 (AASSDMSSDEASSQAE) has biased composition (low complexity). Disordered regions lie at residues 193-219 (AASSDMSSDEASSQAETTGTPKKMPES) and 304-333 (SPFVRKSSSDLEAKPSKKQRSTPAFSHDSP). C2H2-type zinc fingers lie at residues 350–375 (YKCPVPNCDKAYKNQNGLKYHKLHGH) and 399–422 (YRCEVCSKRYKNLNGLKYHRTHSH).

The protein resides in the cytoplasm. Its subcellular location is the nucleus. This is Zinc finger protein sfp1 (sfp1) from Schizosaccharomyces pombe (strain 972 / ATCC 24843) (Fission yeast).